Here is a 462-residue protein sequence, read N- to C-terminus: Chromosomal replication initiator protein DnaA (462 aa).

A domain I, interacts with DnaA modulators region spans residues Met-1 to Ala-84. Positions Ala-84–Ser-125 are domain II. The domain III, AAA+ region stretch occupies residues Asn-126 to Ala-342. ATP-binding residues include Gly-170, Gly-172, Lys-173, and Thr-174. Residues Asn-343–Ser-462 form a domain IV, binds dsDNA region.

Belongs to the DnaA family. In terms of assembly, oligomerizes as a right-handed, spiral filament on DNA at oriC.

The protein resides in the cytoplasm. Its function is as follows. Plays an essential role in the initiation and regulation of chromosomal replication. ATP-DnaA binds to the origin of replication (oriC) to initiate formation of the DNA replication initiation complex once per cell cycle. Binds the DnaA box (a 9 base pair repeat at the origin) and separates the double-stranded (ds)DNA. Forms a right-handed helical filament on oriC DNA; dsDNA binds to the exterior of the filament while single-stranded (ss)DNA is stabiized in the filament's interior. The ATP-DnaA-oriC complex binds and stabilizes one strand of the AT-rich DNA unwinding element (DUE), permitting loading of DNA polymerase. After initiation quickly degrades to an ADP-DnaA complex that is not apt for DNA replication. Binds acidic phospholipids. The sequence is that of Chromosomal replication initiator protein DnaA from Shewanella denitrificans (strain OS217 / ATCC BAA-1090 / DSM 15013).